The sequence spans 371 residues: Cytochrome b (371 aa).

The next 4 helical transmembrane spans lie at 25-45 (FGSM…FLAV), 69-90 (WMMQ…YIHI), 105-125 (WLSG…GYVL), and 170-190 (FFAL…LHIM). Heme b contacts are provided by H75 and H89. H174 and H188 together coordinate heme b. H193 contacts a ubiquinone. 4 helical membrane passes run 218–238 (YKDL…VSFL), 280–300 (LGGA…PFTH), 312–332 (IMQL…WAAT), and 339–358 (FTMI…IMNP).

The protein belongs to the cytochrome b family. As to quaternary structure, the cytochrome bc1 complex contains 3 respiratory subunits (MT-CYB, CYC1 and UQCRFS1), 2 core proteins (UQCRC1 and UQCRC2) and probably 6 low-molecular weight proteins. It depends on heme b as a cofactor.

The protein localises to the mitochondrion inner membrane. Its function is as follows. Component of the ubiquinol-cytochrome c reductase complex (complex III or cytochrome b-c1 complex) that is part of the mitochondrial respiratory chain. The b-c1 complex mediates electron transfer from ubiquinol to cytochrome c. Contributes to the generation of a proton gradient across the mitochondrial membrane that is then used for ATP synthesis. The chain is Cytochrome b (MT-CYB) from Eryx miliaris (Desert sand boa).